Reading from the N-terminus, the 174-residue chain is Small ribosomal subunit protein uS5 (174 aa).

Residues 16–79 (LSELLVSVRR…NAAKKSMIRV (64 aa)) enclose the S5 DRBM domain.

The protein belongs to the universal ribosomal protein uS5 family. Part of the 30S ribosomal subunit. Contacts proteins S4 and S8.

Functionally, with S4 and S12 plays an important role in translational accuracy. Located at the back of the 30S subunit body where it stabilizes the conformation of the head with respect to the body. In Anaplasma marginale (strain Florida), this protein is Small ribosomal subunit protein uS5.